We begin with the raw amino-acid sequence, 227 residues long: Cytochrome c oxidase subunit 2 (227 aa).

The Mitochondrial intermembrane segment spans residues 1–14 (MPYPLQLGFQDATS). A helical transmembrane segment spans residues 15–45 (PIMEELLHFHDHTLMIVFLISSLVLYIITLM). Topologically, residues 46 to 59 (LTTKLTHTSTMDAQ) are mitochondrial matrix. The chain crosses the membrane as a helical span at residues 60–87 (EVETVWTILPAVILILIALPSLRILYMM). Over 88-227 (DEINNPLLTI…HFEDWSTSML (140 aa)) the chain is Mitochondrial intermembrane. Positions 161, 196, 198, 200, 204, and 207 each coordinate Cu cation. Mg(2+) is bound at residue glutamate 198.

It belongs to the cytochrome c oxidase subunit 2 family. In terms of assembly, component of the cytochrome c oxidase (complex IV, CIV), a multisubunit enzyme composed of 14 subunits. The complex is composed of a catalytic core of 3 subunits MT-CO1, MT-CO2 and MT-CO3, encoded in the mitochondrial DNA, and 11 supernumerary subunits COX4I, COX5A, COX5B, COX6A, COX6B, COX6C, COX7A, COX7B, COX7C, COX8 and NDUFA4, which are encoded in the nuclear genome. The complex exists as a monomer or a dimer and forms supercomplexes (SCs) in the inner mitochondrial membrane with NADH-ubiquinone oxidoreductase (complex I, CI) and ubiquinol-cytochrome c oxidoreductase (cytochrome b-c1 complex, complex III, CIII), resulting in different assemblies (supercomplex SCI(1)III(2)IV(1) and megacomplex MCI(2)III(2)IV(2)). Found in a complex with TMEM177, COA6, COX18, COX20, SCO1 and SCO2. Interacts with TMEM177 in a COX20-dependent manner. Interacts with COX20. Interacts with COX16. It depends on Cu cation as a cofactor.

Its subcellular location is the mitochondrion inner membrane. The enzyme catalyses 4 Fe(II)-[cytochrome c] + O2 + 8 H(+)(in) = 4 Fe(III)-[cytochrome c] + 2 H2O + 4 H(+)(out). Its function is as follows. Component of the cytochrome c oxidase, the last enzyme in the mitochondrial electron transport chain which drives oxidative phosphorylation. The respiratory chain contains 3 multisubunit complexes succinate dehydrogenase (complex II, CII), ubiquinol-cytochrome c oxidoreductase (cytochrome b-c1 complex, complex III, CIII) and cytochrome c oxidase (complex IV, CIV), that cooperate to transfer electrons derived from NADH and succinate to molecular oxygen, creating an electrochemical gradient over the inner membrane that drives transmembrane transport and the ATP synthase. Cytochrome c oxidase is the component of the respiratory chain that catalyzes the reduction of oxygen to water. Electrons originating from reduced cytochrome c in the intermembrane space (IMS) are transferred via the dinuclear copper A center (CU(A)) of subunit 2 and heme A of subunit 1 to the active site in subunit 1, a binuclear center (BNC) formed by heme A3 and copper B (CU(B)). The BNC reduces molecular oxygen to 2 water molecules using 4 electrons from cytochrome c in the IMS and 4 protons from the mitochondrial matrix. This is Cytochrome c oxidase subunit 2 (MT-CO2) from Dasypus novemcinctus (Nine-banded armadillo).